Consider the following 66-residue polypeptide: Cold shock-like protein CspLB (66 aa).

The 60-residue stretch at 4–63 (GTVKWFNSEKGFGFIEVEGGDDVFVHFSAIEGEGFKTLDEGQSVEFEIVEGQRGPQAEKV) folds into the CSD domain.

Homodimer.

It localises to the cytoplasm. The protein is Cold shock-like protein CspLB (cspLB) of Listeria monocytogenes serovar 1/2a (strain ATCC BAA-679 / EGD-e).